A 312-amino-acid chain; its full sequence is HPr kinase/phosphorylase (312 aa).

Catalysis depends on residues His-139 and Lys-160. 154-161 is an ATP binding site; the sequence is GDSGIGKS. Ser-161 provides a ligand contact to Mg(2+). The active-site Proton acceptor; for phosphorylation activity. Proton donor; for dephosphorylation activity is the Asp-178. Residues 202-211 are important for the catalytic mechanism of both phosphorylation and dephosphorylation; that stretch reads IEIRGVGIID. Mg(2+) is bound at residue Glu-203. The active site involves Arg-244. Positions 265–270 are important for the catalytic mechanism of dephosphorylation; that stretch reads PVKTGR.

This sequence belongs to the HPrK/P family. In terms of assembly, homohexamer. It depends on Mg(2+) as a cofactor.

It carries out the reaction [HPr protein]-L-serine + ATP = [HPr protein]-O-phospho-L-serine + ADP + H(+). It catalyses the reaction [HPr protein]-O-phospho-L-serine + phosphate + H(+) = [HPr protein]-L-serine + diphosphate. Functionally, catalyzes the ATP- as well as the pyrophosphate-dependent phosphorylation of a specific serine residue in HPr, a phosphocarrier protein of the phosphoenolpyruvate-dependent sugar phosphotransferase system (PTS). HprK/P also catalyzes the pyrophosphate-producing, inorganic phosphate-dependent dephosphorylation (phosphorolysis) of seryl-phosphorylated HPr (P-Ser-HPr). The two antagonistic activities of HprK/P are regulated by several intracellular metabolites, which change their concentration in response to the absence or presence of rapidly metabolisable carbon sources (glucose, fructose, etc.) in the growth medium. Therefore, by controlling the phosphorylation state of HPr, HPrK/P is a sensor enzyme that plays a major role in the regulation of carbon metabolism and sugar transport: it mediates carbon catabolite repression (CCR), and regulates PTS-catalyzed carbohydrate uptake and inducer exclusion. This Streptococcus pneumoniae (strain ATCC BAA-255 / R6) protein is HPr kinase/phosphorylase.